Reading from the N-terminus, the 238-residue chain is Phosphoribosylaminoimidazole-succinocarboxamide synthase (238 aa).

The protein belongs to the SAICAR synthetase family.

The enzyme catalyses 5-amino-1-(5-phospho-D-ribosyl)imidazole-4-carboxylate + L-aspartate + ATP = (2S)-2-[5-amino-1-(5-phospho-beta-D-ribosyl)imidazole-4-carboxamido]succinate + ADP + phosphate + 2 H(+). It functions in the pathway purine metabolism; IMP biosynthesis via de novo pathway; 5-amino-1-(5-phospho-D-ribosyl)imidazole-4-carboxamide from 5-amino-1-(5-phospho-D-ribosyl)imidazole-4-carboxylate: step 1/2. This is Phosphoribosylaminoimidazole-succinocarboxamide synthase from Persephonella marina (strain DSM 14350 / EX-H1).